An 84-amino-acid chain; its full sequence is Small ribosomal subunit protein uS17 (84 aa).

This sequence belongs to the universal ribosomal protein uS17 family. In terms of assembly, part of the 30S ribosomal subunit.

In terms of biological role, one of the primary rRNA binding proteins, it binds specifically to the 5'-end of 16S ribosomal RNA. This chain is Small ribosomal subunit protein uS17, found in Clostridium botulinum (strain 657 / Type Ba4).